We begin with the raw amino-acid sequence, 200 residues long: MFAELAPYLSNPRQTLAQILNFALVLSTAFMGWKALSVYTNSPSPIVVVLSGSMEPAFQRGDLLFLWNNSPRAEVGEIVVYNVQGKDIPIVHRVIKAFGAGDGGNKSQRRLEREADKPSGPGLSSPLSHQILTKGDNNIADDTELYAQGQDYLDRKLDIVGSVRGYIPAVGYVTIMLAENPWMKTVLLGIMGVMVMLQRE.

Residues 1-14 (MFAELAPYLSNPRQ) lie on the Cytoplasmic side of the membrane. Residues 15-33 (TLAQILNFALVLSTAFMGW) traverse the membrane as a helical; Signal-anchor for type II membrane protein segment. Over 34–200 (KALSVYTNSP…MGVMVMLQRE (167 aa)) the chain is Lumenal. Catalysis depends on charge relay system residues serine 53 and histidine 92. Residues 101–129 (GDGGNKSQRRLEREADKPSGPGLSSPLSH) are disordered. Asparagine 105 carries an N-linked (GlcNAc...) asparagine glycan. Residues 118–128 (PSGPGLSSPLS) show a composition bias toward low complexity. Aspartate 142 (charge relay system) is an active-site residue. A C-terminal short (CTS) helix region spans residues 186 to 197 (VLLGIMGVMVML).

It belongs to the peptidase S26B family. In terms of assembly, component of the signal peptidase complex (SPC) composed of a catalytic subunit SEC11 and three accessory subunits SPC1, SPC2 and SPC3. The complex induces a local thinning of the ER membrane which is used to measure the length of the signal peptide (SP) h-region of protein substrates. This ensures the selectivity of the complex towards h-regions shorter than 18-20 amino acids. SPC associates with the translocon complex.

Its subcellular location is the endoplasmic reticulum membrane. The enzyme catalyses Cleavage of hydrophobic, N-terminal signal or leader sequences from secreted and periplasmic proteins.. Functionally, catalytic component of the signal peptidase complex (SPC) which catalyzes the cleavage of N-terminal signal sequences from nascent proteins as they are translocated into the lumen of the endoplasmic reticulum. Specifically cleaves N-terminal signal peptides that contain a hydrophobic alpha-helix (h-region) shorter than 18-20 amino acids. The polypeptide is Signal peptidase complex catalytic subunit SEC11 (SEC11) (Arthroderma otae (strain ATCC MYA-4605 / CBS 113480) (Microsporum canis)).